A 117-amino-acid chain; its full sequence is Fluoride-specific ion channel FluC 2 (117 aa).

2 consecutive transmembrane segments (helical) span residues 1–21 (MISIILVMIGGGFGAITRSAI) and 46–66 (FLIGLNIGLSISISWFPAFFV). Gly71 and Thr74 together coordinate Na(+). The chain crosses the membrane as a helical span at residues 95 to 115 (LFLNYSLLQFIIGFIACYIGY).

It belongs to the fluoride channel Fluc/FEX (TC 1.A.43) family.

It localises to the cell membrane. It catalyses the reaction fluoride(in) = fluoride(out). Its activity is regulated as follows. Na(+) is not transported, but it plays an essential structural role and its presence is essential for fluoride channel function. In terms of biological role, fluoride-specific ion channel. Important for reducing fluoride concentration in the cell, thus reducing its toxicity. This is Fluoride-specific ion channel FluC 2 from Staphylococcus aureus (strain MSSA476).